Reading from the N-terminus, the 103-residue chain is UPF0145 protein HH_1800 (103 aa).

It belongs to the UPF0145 family.

This is UPF0145 protein HH_1800 from Helicobacter hepaticus (strain ATCC 51449 / 3B1).